Reading from the N-terminus, the 278-residue chain is Octanoyltransferase LipM (278 aa).

Residues 33 to 248 (KKMPPTIRFY…GFEKGLDVEL (216 aa)) form the BPL/LPL catalytic domain. Cys-150 serves as the catalytic Acyl-thioester intermediate.

The protein belongs to the octanoyltransferase LipM family. In terms of assembly, monomer.

The catalysed reaction is octanoyl-[ACP] + L-lysyl-[protein] = N(6)-octanoyl-L-lysyl-[protein] + holo-[ACP] + H(+). It participates in protein modification; protein lipoylation via endogenous pathway; protein N(6)-(lipoyl)lysine from octanoyl-[acyl-carrier-protein]. Its function is as follows. Catalyzes the transfer of endogenously produced octanoic acid from octanoyl-acyl-carrier-protein onto the lipoyl domain of GcvH, an intermediate carrier during protein lipoylation. The sequence is that of Octanoyltransferase LipM from Bacillus cereus (strain ATCC 14579 / DSM 31 / CCUG 7414 / JCM 2152 / NBRC 15305 / NCIMB 9373 / NCTC 2599 / NRRL B-3711).